We begin with the raw amino-acid sequence, 360 residues long: MDVGSPEAFSESGTLGVEEEFFVVDEHGVPTAGSDELVYEGEPPEPIAGRLDHELFKFVVETQTPTLNGVAEAPAAIREVRAALVAYASEHGLRIAGAGLHPGARWREHEHAEKPRYRSQLDRIQYPQHRNTTAGLHIHVGVDDPDKAVWVSNRMRWHMPVLLALSANSPYWNGFDTGLASARAKIFEGLPNTGLPTAFESYAAFQAFERRMVEHGGIEDRGELWYDVRPHSGHGTVEVRAPDAQADPAVVDAFVEYAHALVTEYAQRYDDHPDPFSVTGLRRELLDANKWRAMRDGHDASFVARETQGAVDLGTVVDRECDRLGVSGIRDVYDDVSGAQQQRRILDTHGEKRLYNHLSL.

This sequence belongs to the glutamate--cysteine ligase type 2 family. YbdK subfamily.

It carries out the reaction L-cysteine + L-glutamate + ATP = gamma-L-glutamyl-L-cysteine + ADP + phosphate + H(+). Catalyzes the synthesis of gamma-glutamylcysteine (gamma-GC), the main low-molecular-weight thiol compound instead of glutathione in halophilic archaea. The polypeptide is Glutamate--cysteine ligase (Halobacterium salinarum (strain ATCC 29341 / DSM 671 / R1)).